Reading from the N-terminus, the 263-residue chain is Phosphonates import ATP-binding protein PhnC 1 (263 aa).

An ABC transporter domain is found at 3-248 (IQVENLWVAF…KEKELYFGEK (246 aa)). 37-44 (GPSGAGKS) is an ATP binding site.

It belongs to the ABC transporter superfamily. Phosphonates importer (TC 3.A.1.9.1) family. In terms of assembly, the complex is composed of two ATP-binding proteins (PhnC), two transmembrane proteins (PhnE) and a solute-binding protein (PhnD).

The protein localises to the cell inner membrane. The enzyme catalyses phosphonate(out) + ATP + H2O = phosphonate(in) + ADP + phosphate + H(+). Its function is as follows. Part of the ABC transporter complex PhnCDE involved in phosphonates import. Responsible for energy coupling to the transport system. The chain is Phosphonates import ATP-binding protein PhnC 1 from Synechococcus sp. (strain JA-2-3B'a(2-13)) (Cyanobacteria bacterium Yellowstone B-Prime).